The sequence spans 284 residues: Nucleoid occlusion protein (284 aa).

Residues 143-162 constitute a DNA-binding region (H-T-H motif); that stretch reads EALAQRVGKSQSAIANKMRL.

It belongs to the ParB family.

Its subcellular location is the cytoplasm. It localises to the nucleoid. In terms of biological role, effects nucleoid occlusion by binding relatively nonspecifically to DNA and preventing the assembly of the division machinery in the vicinity of the nucleoid, especially under conditions that disturb the cell cycle. It helps to coordinate cell division and chromosome segregation by preventing the formation of the Z ring through the nucleoid, which would cause chromosome breakage. In Listeria monocytogenes serovar 1/2a (strain ATCC BAA-679 / EGD-e), this protein is Nucleoid occlusion protein.